Reading from the N-terminus, the 200-residue chain is Inducible T-cell costimulator (200 aa).

A signal peptide spans M1 to G20. The Extracellular segment spans residues E21–L144. N23 carries N-linked (GlcNAc...) asparagine glycosylation. In terms of domain architecture, Ig-like V-type spans M30–E133. 2 disulfides stabilise this stretch: C42/C109 and C63/C83. 2 N-linked (GlcNAc...) asparagine glycosylation sites follow: N89 and N123. Residues P145–F165 traverse the membrane as a helical segment. At S166–S200 the chain is on the cytoplasmic side.

In terms of assembly, homodimer; disulfide-linked. Interacts with ICOSLG. Interacts with PIK3R1. Interacts with TBK1; this interaction is critical for the maturation of T follicular regulatory cells. Post-translationally, N-glycosylated. In terms of tissue distribution, expressed on activated T-cells and resting memory T-cells. High expression seen in the thymic medulla and in the germinal centers and T-cell zones of lymph nodes and Peyer patches. Expressed at low levels in the spleen.

The protein localises to the cell membrane. Stimulatory receptor expressed in activated or antigen-experienced T-cells that plays an important role in the immune response. Upon binding to its ligand ICOSL expressed on antigen presenting cells (APCs), delivers costimulatory signals that enhances all basic T-cell responses to a foreign antigen, namely proliferation, secretion of lymphokines including IL10, up-regulation of molecules that mediate cell-cell interaction, and effective help for antibody secretion by B-cells. Also acts as a costimulatory receptor critical for the differentiation of T follicular regulatory cells upon immune challenges such as viral infection. Mechanistically, potentiates TCR-induced calcium flux by augmenting PLCG1 activation and actin remodeling. In addition, activates PI3K signaling pathways independently of calcium flux. Essential both for efficient interaction between T and B-cells and for normal antibody responses to T-cell dependent antigens. Prevents the apoptosis of pre-activated T-cells. Plays a critical role in CD40-mediated class switching of immunoglobin isotypes. This is Inducible T-cell costimulator (Icos) from Mus musculus (Mouse).